We begin with the raw amino-acid sequence, 163 residues long: Peptide methionine sulfoxide reductase MsrA (163 aa).

Residue Cys-10 is part of the active site.

This sequence belongs to the MsrA Met sulfoxide reductase family.

It carries out the reaction L-methionyl-[protein] + [thioredoxin]-disulfide + H2O = L-methionyl-(S)-S-oxide-[protein] + [thioredoxin]-dithiol. The enzyme catalyses [thioredoxin]-disulfide + L-methionine + H2O = L-methionine (S)-S-oxide + [thioredoxin]-dithiol. In terms of biological role, has an important function as a repair enzyme for proteins that have been inactivated by oxidation. Catalyzes the reversible oxidation-reduction of methionine sulfoxide in proteins to methionine. This chain is Peptide methionine sulfoxide reductase MsrA, found in Ruthia magnifica subsp. Calyptogena magnifica.